The chain runs to 374 residues: Alanine racemase (374 aa).

Lysine 40 acts as the Proton acceptor; specific for D-alanine in catalysis. The residue at position 40 (lysine 40) is an N6-(pyridoxal phosphate)lysine. Arginine 136 lines the substrate pocket. Tyrosine 264 (proton acceptor; specific for L-alanine) is an active-site residue. Methionine 311 is a substrate binding site.

It belongs to the alanine racemase family. The cofactor is pyridoxal 5'-phosphate.

It carries out the reaction L-alanine = D-alanine. It participates in amino-acid biosynthesis; D-alanine biosynthesis; D-alanine from L-alanine: step 1/1. Catalyzes the interconversion of L-alanine and D-alanine. May also act on other amino acids. The polypeptide is Alanine racemase (alr) (Pediococcus pentosaceus (strain ATCC 25745 / CCUG 21536 / LMG 10740 / 183-1w)).